Reading from the N-terminus, the 323-residue chain is Aldo-keto reductase family 1 member C4 (323 aa).

NADP(+) contacts are provided by residues 20 to 24 (GFGTY) and Asp-50. Tyr-55 functions as the Proton donor in the catalytic mechanism. His-117 lines the substrate pocket. NADP(+)-binding positions include 166–167 (SN), Gln-190, 216–221 (HSALGT), and 270–280 (KSYNEQRIREN).

The protein belongs to the aldo/keto reductase family. Monomer.

It is found in the cytoplasm. Its subcellular location is the cytosol. The catalysed reaction is chlordecone alcohol + NADP(+) = chlordecone + NADPH + H(+). The enzyme catalyses a 3alpha-hydroxysteroid + NADP(+) = a 3-oxosteroid + NADPH + H(+). It catalyses the reaction a 3alpha-hydroxysteroid + NAD(+) = a 3-oxosteroid + NADH + H(+). It carries out the reaction 5alpha-androstane-3alpha,17beta-diol + NADP(+) = 17beta-hydroxy-5alpha-androstan-3-one + NADPH + H(+). The catalysed reaction is 5alpha-androstane-3beta,17beta-diol + NADP(+) = 17beta-hydroxy-5alpha-androstan-3-one + NADPH + H(+). The enzyme catalyses 5alpha-androstane-3alpha,17beta-diol + NAD(+) = 17beta-hydroxy-5alpha-androstan-3-one + NADH + H(+). It catalyses the reaction 17beta-estradiol + NADP(+) = estrone + NADPH + H(+). It carries out the reaction 17beta-estradiol + NAD(+) = estrone + NADH + H(+). The catalysed reaction is (20S)-hydroxypregn-4-en-3-one + NADP(+) = progesterone + NADPH + H(+). The enzyme catalyses (20S)-hydroxypregn-4-en-3-one + NAD(+) = progesterone + NADH + H(+). It catalyses the reaction androsterone + NADP(+) = 5alpha-androstan-3,17-dione + NADPH + H(+). It carries out the reaction testosterone + NADP(+) = androst-4-ene-3,17-dione + NADPH + H(+). The catalysed reaction is testosterone + NAD(+) = androst-4-ene-3,17-dione + NADH + H(+). The enzyme catalyses 3alpha-hydroxy-5alpha-androstane 17-O-(beta-D-glucuronate) + NADP(+) = 5alpha-dihydrotestosterone 17-O-(beta-D-glucuronate) + NADPH + H(+). It catalyses the reaction (3beta,5alpha,17beta)-3-hydroxy-androstan-17-yl sulfate + NADP(+) = 5alpha-dihydrotestosterone sulfate + NADPH + H(+). It carries out the reaction 5alpha-androstane-3alpha,17beta-diol + NAD(+) = androsterone + NADH + H(+). It participates in steroid metabolism. Its function is as follows. Cytosolic aldo-keto reductase that catalyzes the NADH and NADPH-dependent reduction of ketosteroids to hydroxysteroids. Liver specific enzyme that acts as an NAD(P)(H)-dependent 3-, 17- and 20-ketosteroid reductase on the steroid nucleus and side chain. Displays the ability to catalyze both oxidation and reduction in vitro, but most probably acts as a reductase in vivo since the oxidase activity measured in vitro is inhibited by physiological concentration of NADPH. Acts preferentially as a 3-alpha-hydroxysteroid dehydrogenase (HSD) with a subsidiary 3-beta-HSD activity. Catalyzes efficiently the transformation of the potent androgen 5-alpha-dihydrotestosterone (5alpha-DHT or 17beta-hydroxy-5alpha-androstan-3-one) into the less active form, 5-alpha-androstan-3-alpha,17-beta-diol (3-alpha-diol). Catalyzes the reduction of estrone into 17beta-estradiol but with low efficiency. Metabolizes a broad spectrum of natural and synthetic therapeutic steroid and plays an important role in metabolism of androgens, estrogens, progestereone and conjugated steroids. Catalyzes the biotransformation of the pesticide chlordecone (kepone) to its corresponding alcohol leading to increased biliary excretion of the pesticide and concomitant reduction of its neurotoxicity since bile is the major excretory route. This chain is Aldo-keto reductase family 1 member C4 (AKR1C4), found in Macaca fascicularis (Crab-eating macaque).